The chain runs to 101 residues: Protein Tat (101 aa).

The segment at Met-1 to Thr-20 is disordered. The interval Met-1 to Asn-24 is interaction with human CREBBP. The transactivation stretch occupies residues Met-1–Gly-48. 3 residues coordinate Zn(2+): Cys-22, Cys-25, and Cys-27. Positions Cys-22–Cys-37 are cysteine-rich. At Lys-28 the chain carries N6-acetyllysine; by host PCAF. Zn(2+) contacts are provided by Cys-30, His-33, Cys-34, and Cys-37. Positions Phe-38–Gly-48 are core. The interval Ile-45–Asn-101 is disordered. A compositionally biased stretch (basic residues) spans Gly-48 to Arg-57. Positions Arg-49–Arg-57 match the Nuclear localization signal, RNA-binding (TAR), and protein transduction motif. Residues Arg-49–Glu-86 form an interaction with the host capping enzyme RNGTT region. 2 positions are modified to N6-acetyllysine; by host EP300 and GCN5L2: Lys-50 and Lys-51. Residues Arg-52 and Arg-53 each carry the asymmetric dimethylarginine; by host PRMT6 modification. Residues Asp-61 to Gly-79 are compositionally biased toward polar residues. Lys-71 participates in a covalent cross-link: Glycyl lysine isopeptide (Lys-Gly) (interchain with G-Cter in ubiquitin). The Cell attachment site motif lies at Arg-78 to Asp-80. A compositionally biased stretch (basic and acidic residues) spans Gly-83–Asn-101.

Belongs to the lentiviruses Tat family. In terms of assembly, interacts with host CCNT1. Associates with the P-TEFb complex composed at least of Tat, P-TEFb (CDK9 and CCNT1), TAR RNA, RNA Pol II. Recruits the HATs CREBBP, TAF1/TFIID, EP300, PCAF and GCN5L2. Interacts with host KAT5/Tip60; this interaction targets the latter to degradation. Interacts with the host deacetylase SIRT1. Interacts with host capping enzyme RNGTT; this interaction stimulates RNGTT. Binds to host KDR, and to the host integrins ITGAV/ITGB3 and ITGA5/ITGB1. Interacts with host KPNB1/importin beta-1 without previous binding to KPNA1/importin alpha-1. Interacts with EIF2AK2. Interacts with host nucleosome assembly protein NAP1L1; this interaction may be required for the transport of Tat within the nucleus, since the two proteins interact at the nuclear rim. Interacts with host C1QBP/SF2P32; this interaction involves lysine-acetylated Tat. Interacts with the host chemokine receptors CCR2, CCR3 and CXCR4. Interacts with host DPP4/CD26; this interaction may trigger an anti-proliferative effect. Interacts with host LDLR. Interacts with the host extracellular matrix metalloproteinase MMP1. Interacts with host PRMT6; this interaction mediates Tat's methylation. Interacts with, and is ubiquitinated by MDM2/Hdm2. Interacts with host PSMC3 and HTATIP2. Interacts with STAB1; this interaction may overcome SATB1-mediated repression of IL2 and IL2RA (interleukin) in T cells by binding to the same domain than HDAC1. Interacts (when acetylated) with human CDK13, thereby increasing HIV-1 mRNA splicing and promoting the production of the doubly spliced HIV-1 protein Nef. Interacts with host TBP; this interaction modulates the activity of transcriptional pre-initiation complex. Interacts with host RELA. Interacts with host PLSCR1; this interaction negatively regulates Tat transactivation activity by altering its subcellular distribution. Post-translationally, asymmetrical arginine methylation by host PRMT6 seems to diminish the transactivation capacity of Tat and affects the interaction with host CCNT1. In terms of processing, acetylation by EP300, CREBBP, GCN5L2/GCN5 and PCAF regulates the transactivation activity of Tat. EP300-mediated acetylation of Lys-50 promotes dissociation of Tat from the TAR RNA through the competitive binding to PCAF's bromodomain. In addition, the non-acetylated Tat's N-terminus can also interact with PCAF. PCAF-mediated acetylation of Lys-28 enhances Tat's binding to CCNT1. Lys-50 is deacetylated by SIRT1. Polyubiquitination by host MDM2 does not target Tat to degradation, but activates its transactivation function and fosters interaction with CCNT1 and TAR RNA. Post-translationally, phosphorylated by EIF2AK2 on serine and threonine residues adjacent to the basic region important for TAR RNA binding and function. Phosphorylation of Tat by EIF2AK2 is dependent on the prior activation of EIF2AK2 by dsRNA.

It is found in the host nucleus. It localises to the host nucleolus. Its subcellular location is the host cytoplasm. The protein resides in the secreted. Functionally, transcriptional activator that increases RNA Pol II processivity, thereby increasing the level of full-length viral transcripts. Recognizes a hairpin structure at the 5'-LTR of the nascent viral mRNAs referred to as the transactivation responsive RNA element (TAR) and recruits the cyclin T1-CDK9 complex (P-TEFb complex) that will in turn hyperphosphorylate the RNA polymerase II to allow efficient elongation. The CDK9 component of P-TEFb and other Tat-activated kinases hyperphosphorylate the C-terminus of RNA Pol II that becomes stabilized and much more processive. Other factors such as HTATSF1/Tat-SF1, SUPT5H/SPT5, and HTATIP2 are also important for Tat's function. Besides its effect on RNA Pol II processivity, Tat induces chromatin remodeling of proviral genes by recruiting the histone acetyltransferases (HATs) CREBBP, EP300 and PCAF to the chromatin. This also contributes to the increase in proviral transcription rate, especially when the provirus integrates in transcriptionally silent region of the host genome. To ensure maximal activation of the LTR, Tat mediates nuclear translocation of NF-kappa-B by interacting with host RELA. Through its interaction with host TBP, Tat may also modulate transcription initiation. Tat can reactivate a latently infected cell by penetrating in it and transactivating its LTR promoter. In the cytoplasm, Tat is thought to act as a translational activator of HIV-1 mRNAs. In terms of biological role, extracellular circulating Tat can be endocytosed by surrounding uninfected cells via the binding to several surface receptors such as CD26, CXCR4, heparan sulfate proteoglycans (HSPG) or LDLR. Neurons are rarely infected, but they internalize Tat via their LDLR. Through its interaction with nuclear HATs, Tat is potentially able to control the acetylation-dependent cellular gene expression. Modulates the expression of many cellular genes involved in cell survival, proliferation or in coding for cytokines or cytokine receptors. Tat plays a role in T-cell and neurons apoptosis. Tat induced neurotoxicity and apoptosis probably contribute to neuroAIDS. Circulating Tat also acts as a chemokine-like and/or growth factor-like molecule that binds to specific receptors on the surface of the cells, affecting many cellular pathways. In the vascular system, Tat binds to ITGAV/ITGB3 and ITGA5/ITGB1 integrins dimers at the surface of endothelial cells and competes with bFGF for heparin-binding sites, leading to an excess of soluble bFGF. The protein is Protein Tat of Homo sapiens (Human).